The following is a 609-amino-acid chain: Zinc metalloproteinase-disintegrin-like VAP2B (609 aa).

The first 20 residues, 1–20 (MIQVLLVTICLAAFPYQGSS), serve as a signal peptide directing secretion. A propeptide spanning residues 21 to 189 (IILESGNVND…KKASQLVVTA (169 aa)) is cleaved from the precursor. E190 is subject to Pyrrolidone carboxylic acid (Glu). The 196-residue stretch at 198-393 (RFVELFLVVD…HNPECILNEP (196 aa)) folds into the Peptidase M12B domain. Ca(2+) is bound by residues E201 and D285. 3 disulfide bridges follow: C308–C388, C348–C372, and C350–C355. H333 is a Zn(2+) binding site. Residue E334 is part of the active site. 2 residues coordinate Zn(2+): H337 and H343. An N-linked (GlcNAc...) asparagine glycan is attached at N371. Residues C388, N391, V403, N406, L408, E410, E413, and D416 each contribute to the Ca(2+) site. The region spanning 401–487 (PPVCGNELLE…ECPADVFHKN (87 aa)) is the Disintegrin domain. Intrachain disulfides connect C404–C423, C404–C433, C415–C428, C415–C433, C417–C423, C427–C450, C441–C447, C446–C472, C459–C479, C466–C491, C466–C498, C491–C503, C498–C503, C510–C525, C510–C560, C525–C571, C538–C548, C548–C555, C555–C597, C560–C571, C591–C602, and C597–C602. Residues 459–472 (CRASMSECDPAEHC) are inhibits platelet aggregation. The D/ECD-tripeptide signature appears at 465 to 467 (ECD). Residues D467, P468, E470, D482, and V483 each coordinate Ca(2+).

The protein belongs to the venom metalloproteinase (M12B) family. P-III subfamily. P-IIIb sub-subfamily. As to quaternary structure, monomer or heterodimer; non-covalently linked. Interacts with fibrillar collagen. Zn(2+) serves as cofactor. Post-translationally, the N-terminus is blocked. As to expression, expressed by the venom gland.

The protein resides in the secreted. Its function is as follows. Zinc metalloprotease that abolishes platelet aggregation induced by collagen, but has no effect on platelet aggregation induced by ADP or thromboxane analog. This inhibition may be due to its ability to bind collagen and block the binding site on collagen for platelets and/or to its ability to bind to the platelet alpha-2/beta-1 collagen receptor (ITGA2/ITGB1) to block its interaction with collagen and hence prevent platelet stimulation. In terms of biological role, abolishes platelet aggregation induced by collagen (IC(50)=66 nM) but not ADP-stimulated platelet aggregation. This inhibition may be due to its ability to bind collagen and block the binding site on collagen for platelets and/or to its ability to bind to the platelet alpha-2/beta-1 collagen receptor (ITGA2/ITGB1) to block its interaction with collagen and hence prevent platelet stimulation. This chain is Zinc metalloproteinase-disintegrin-like VAP2B, found in Crotalus atrox (Western diamondback rattlesnake).